Consider the following 249-residue polypeptide: tRNA pseudouridine synthase A (249 aa).

Catalysis depends on Asp-53, which acts as the Nucleophile. Tyr-111 is a binding site for substrate.

It belongs to the tRNA pseudouridine synthase TruA family. In terms of assembly, homodimer.

It carries out the reaction uridine(38/39/40) in tRNA = pseudouridine(38/39/40) in tRNA. Formation of pseudouridine at positions 38, 39 and 40 in the anticodon stem and loop of transfer RNAs. The chain is tRNA pseudouridine synthase A from Streptococcus sanguinis (strain SK36).